A 465-amino-acid chain; its full sequence is Sorting nexin-8 (465 aa).

Low complexity predominate over residues 1–19 (MTGRAMDPLPAAAVGAAAE). Positions 1-36 (MTGRAMDPLPAAAVGAAAEAEADEEADPPASDLPTP) are disordered. Positions 73-181 (ARDTVQVELI…KLFLSFSGSD (109 aa)) constitute a PX domain. A 1,2-diacyl-sn-glycero-3-phospho-(1D-myo-inositol-3-phosphate) is bound by residues R109, K135, and R148. Residue T452 is modified to Phosphothreonine. S456 is subject to Phosphoserine.

Belongs to the sorting nexin family.

It is found in the early endosome membrane. Its function is as follows. May be involved in several stages of intracellular trafficking. May play a role in intracellular protein transport from early endosomes to the trans-Golgi network. This chain is Sorting nexin-8 (SNX8), found in Homo sapiens (Human).